Here is a 248-residue protein sequence, read N- to C-terminus: Murein peptide amidase A (248 aa).

Residues 3-245 (RYYSNNQEIT…DAFIALLQHD (243 aa)) enclose the Peptidase M14 domain. Positions 60, 63, and 168 each coordinate Zn(2+). The active-site Proton donor/acceptor is E221.

This sequence belongs to the peptidase M14 family. As to quaternary structure, homodimer. Zn(2+) is required as a cofactor.

Its subcellular location is the cytoplasm. The enzyme catalyses L-alanyl-gamma-D-glutamyl-meso-2,6-diaminopimelate + H2O = L-alanyl-D-glutamate + meso-2,6-diaminopimelate. It functions in the pathway cell wall degradation; peptidoglycan degradation. Its function is as follows. Involved in muropeptide degradation. Catalyzes the hydrolysis of the gamma-D-glutamyl-diaminopimelic acid (gamma-D-Glu-Dap) amide bond in the murein tripeptide L-alanyl-gamma-D-glutamyl-meso-diaminopimelic acid, leading to the formation of L-Ala-gamma-D-Glu and Dap. Has weak activity with L-Ala-gamma-D-Glu-L-Lys, MurNAc-tripeptide and gamma-D-Glu-meso-Dap. Cannot hydrolyze murein tetrapeptide. The polypeptide is Murein peptide amidase A (Vibrio campbellii (strain ATCC BAA-1116)).